Consider the following 850-residue polypeptide: Vacuolar membrane protease (850 aa).

Residues 1–20 (MASSRAQWFNPIAFTPWPVT) are Cytoplasmic-facing. Residues 21–41 (CITTIVYLALLIPILVINLVV) form a helical membrane-spanning segment. At 42–282 (PSAPETNPKG…DGKSKDQNKV (241 aa)) the chain is on the vacuolar side. 3 N-linked (GlcNAc...) asparagine glycosylation sites follow: Asn-53, Asn-116, and Asn-119. Residues His-175 and Asp-187 each contribute to the Zn(2+) site. The active-site Proton acceptor is Glu-221. Position 222 (Glu-222) interacts with Zn(2+). A helical membrane pass occupies residues 283 to 303 (NSGTGTLGVWFDMFGTAFAVF). Residues 304–308 (RLHTL) are Cytoplasmic-facing. The helical transmembrane segment at 309-329 (FAISVALLVIAPLVIFVTSVI) threads the bilayer. Over 330-363 (LSKTDRMYLFSMSKSLEGTGDQVSLRGLRGFSRT) the chain is Vacuolar. The chain crosses the membrane as a helical span at residues 364-384 (PIILVIATTIPICLAYLLEKV). The Cytoplasmic portion of the chain corresponds to 385-393 (NPYIVHSSQ). The chain crosses the membrane as a helical span at residues 394-414 (FSVWSMMFSAWIFLAWFLACA). The Vacuolar portion of the chain corresponds to 415-425 (ADFFRPSALHR). A helical transmembrane segment spans residues 426 to 446 (AYSYTWIFIATWIMLVINTVY). Topologically, residues 447–529 (ANQKGIAAGP…TLPRWTWVLQ (83 aa)) are cytoplasmic. A helical membrane pass occupies residues 530 to 550 (LLLLAPIVLILVGQLALFLTA). Residues 551-563 (SMCQVGSDGVSTF) are Vacuolar-facing. The chain crosses the membrane as a helical span at residues 564–584 (VVYLACSVFTTLLCIPLFPLI). The Cytoplasmic portion of the chain corresponds to 585–590 (HRFTYH). The chain crosses the membrane as a helical span at residues 591–611 (IPTFLFLVFIGTLIYNLVAFP). At 612–850 (FSPANRLKTF…VEASHSFTIQ (239 aa)) the chain is on the vacuolar side. N-linked (GlcNAc...) asparagine glycans are attached at residues Asn-630, Asn-658, and Asn-702.

The protein belongs to the peptidase M28 family. Zn(2+) serves as cofactor.

The protein localises to the vacuole membrane. In terms of biological role, may be involved in vacuolar sorting and osmoregulation. In Ajellomyces capsulatus (strain NAm1 / WU24) (Darling's disease fungus), this protein is Vacuolar membrane protease.